Consider the following 265-residue polypeptide: Cyclin-B2-5 (265 aa).

This sequence belongs to the cyclin family. Cyclin AB subfamily.

In Arabidopsis thaliana (Mouse-ear cress), this protein is Cyclin-B2-5 (CYCB2-5).